A 234-amino-acid polypeptide reads, in one-letter code: ATP synthase subunit delta, chloroplastic (234 aa).

A chloroplast-targeting transit peptide spans 1-47 (MASLQQTLFSLQSKLPPSSFQIARSLPLRKTFPIRINNGGNAAGARM). Ser-48 bears the N-acetylserine mark. The N-linked (GlcNAc...) asparagine glycan is linked to Asn-66. Thr-234 carries the phosphothreonine modification.

This sequence belongs to the ATPase delta chain family. As to quaternary structure, F-type ATPases have 2 components, F(1) - the catalytic core - and F(0) - the membrane proton channel. F(1) has five subunits: alpha(3), beta(3), gamma(1), delta(1), epsilon(1). CF(0) has four main subunits: a(1), b(1), b'(1) and c(10-14). The alpha and beta chains form an alternating ring which encloses part of the gamma chain. F(1) is attached to F(0) by a central stalk formed by the gamma and epsilon chains, while a peripheral stalk is formed by the delta, b and b' chains.

It localises to the plastid. The protein localises to the chloroplast thylakoid membrane. Its function is as follows. F(1)F(0) ATP synthase produces ATP from ADP in the presence of a proton or sodium gradient. F-type ATPases consist of two structural domains, F(1) containing the extramembraneous catalytic core and F(0) containing the membrane proton channel, linked together by a central stalk and a peripheral stalk. During catalysis, ATP synthesis in the catalytic domain of F(1) is coupled via a rotary mechanism of the central stalk subunits to proton translocation (Potential). Essential for photosynthesis, probably by facilitating electron transport in both photosystems I and II. Functionally, this protein is part of the stalk that links CF(0) to CF(1). It either transmits conformational changes from CF(0) to CF(1) or is implicated in proton conduction. The polypeptide is ATP synthase subunit delta, chloroplastic (Arabidopsis thaliana (Mouse-ear cress)).